The following is a 157-amino-acid chain: SsrA-binding protein (157 aa).

Positions 131–157 (KQLHDKRESVKQRDWQRDKARLMRDKG) are disordered. Positions 132–157 (QLHDKRESVKQRDWQRDKARLMRDKG) are enriched in basic and acidic residues.

This sequence belongs to the SmpB family.

It localises to the cytoplasm. Functionally, required for rescue of stalled ribosomes mediated by trans-translation. Binds to transfer-messenger RNA (tmRNA), required for stable association of tmRNA with ribosomes. tmRNA and SmpB together mimic tRNA shape, replacing the anticodon stem-loop with SmpB. tmRNA is encoded by the ssrA gene; the 2 termini fold to resemble tRNA(Ala) and it encodes a 'tag peptide', a short internal open reading frame. During trans-translation Ala-aminoacylated tmRNA acts like a tRNA, entering the A-site of stalled ribosomes, displacing the stalled mRNA. The ribosome then switches to translate the ORF on the tmRNA; the nascent peptide is terminated with the 'tag peptide' encoded by the tmRNA and targeted for degradation. The ribosome is freed to recommence translation, which seems to be the essential function of trans-translation. The chain is SsrA-binding protein from Methylorubrum populi (strain ATCC BAA-705 / NCIMB 13946 / BJ001) (Methylobacterium populi).